The following is a 386-amino-acid chain: DNA-directed RNA polymerase subunit Rpo1C (386 aa).

Belongs to the RNA polymerase beta' chain family. As to quaternary structure, part of the RNA polymerase complex.

It is found in the cytoplasm. The catalysed reaction is RNA(n) + a ribonucleoside 5'-triphosphate = RNA(n+1) + diphosphate. Functionally, DNA-dependent RNA polymerase (RNAP) catalyzes the transcription of DNA into RNA using the four ribonucleoside triphosphates as substrates. Forms part of the jaw domain. The chain is DNA-directed RNA polymerase subunit Rpo1C from Methanococcus maripaludis (strain C7 / ATCC BAA-1331).